The following is a 303-amino-acid chain: 4-hydroxy-tetrahydrodipicolinate synthase (303 aa).

Position 57 (Thr57) interacts with pyruvate. Tyr143 acts as the Proton donor/acceptor in catalysis. Lys171 acts as the Schiff-base intermediate with substrate in catalysis. Residue Ile211 participates in pyruvate binding.

It belongs to the DapA family. In terms of assembly, homotetramer; dimer of dimers.

The protein resides in the cytoplasm. The enzyme catalyses L-aspartate 4-semialdehyde + pyruvate = (2S,4S)-4-hydroxy-2,3,4,5-tetrahydrodipicolinate + H2O + H(+). Its pathway is amino-acid biosynthesis; L-lysine biosynthesis via DAP pathway; (S)-tetrahydrodipicolinate from L-aspartate: step 3/4. Functionally, catalyzes the condensation of (S)-aspartate-beta-semialdehyde [(S)-ASA] and pyruvate to 4-hydroxy-tetrahydrodipicolinate (HTPA). The sequence is that of 4-hydroxy-tetrahydrodipicolinate synthase from Bifidobacterium animalis subsp. lactis (strain AD011).